A 444-amino-acid chain; its full sequence is Type VII secretion system protein EssB (444 aa).

Over 1–229 the chain is Cytoplasmic; sequence MVKNHDPKNE…RKVGHTVFKW (229 aa). The helical transmembrane segment at 230–250 threads the bilayer; it reads VAIGMTTLSVLLIAFLAFLYF. Residues 251–444 lie on the Extracellular side of the membrane; it reads SVMKHNERIE…EKRQEAERKK (194 aa). Residues 366-444 form a disordered region; it reads KNNGDLSNDK…EKRQEAERKK (79 aa). Over residues 372–444 the composition is skewed to basic and acidic residues; that stretch reads SNDKRSEETK…EKRQEAERKK (73 aa). A coiled-coil region spans residues 387-443; sequence LQDILDKEKQVKDEKAKSEEEKAKAKDEKLKQQEENEKKQKEQAQKDKEKRQEAERK.

Belongs to the EssB family.

Its subcellular location is the cell membrane. Functionally, component of the type VII secretion system (Ess). Required for the secretion of EsxA. In Staphylococcus aureus (strain MRSA252), this protein is Type VII secretion system protein EssB.